Here is a 257-residue protein sequence, read N- to C-terminus: UPF0758 protein Bcenmc03_2526 (257 aa).

A disordered region spans residues 1 to 53 (MLSPCPILPSAECRDTADTPADPPGRVIPINRRRRRPGDWRPERPRERLLERG). Residues 37 to 51 (PGDWRPERPRERLLE) are compositionally biased toward basic and acidic residues. In terms of domain architecture, MPN spans 135 to 257 (QIDSPGAVED…TFSFARAGWL (123 aa)). Zn(2+) is bound by residues His-206, His-208, and Asp-219. A JAMM motif motif is present at residues 206–219 (HNHPSGAVQPSAED).

The protein belongs to the UPF0758 family.

The polypeptide is UPF0758 protein Bcenmc03_2526 (Burkholderia orbicola (strain MC0-3)).